A 426-amino-acid polypeptide reads, in one-letter code: Serine--tRNA ligase (426 aa).

Position 233–235 (233–235 (TAE)) interacts with L-serine. Residue 264–266 (RSE) participates in ATP binding. L-serine is bound at residue Glu-287. 351–354 (EISS) serves as a coordination point for ATP. Residue Ser-387 participates in L-serine binding.

The protein belongs to the class-II aminoacyl-tRNA synthetase family. Type-1 seryl-tRNA synthetase subfamily. As to quaternary structure, homodimer. The tRNA molecule binds across the dimer.

It is found in the cytoplasm. The catalysed reaction is tRNA(Ser) + L-serine + ATP = L-seryl-tRNA(Ser) + AMP + diphosphate + H(+). It catalyses the reaction tRNA(Sec) + L-serine + ATP = L-seryl-tRNA(Sec) + AMP + diphosphate + H(+). It participates in aminoacyl-tRNA biosynthesis; selenocysteinyl-tRNA(Sec) biosynthesis; L-seryl-tRNA(Sec) from L-serine and tRNA(Sec): step 1/1. Catalyzes the attachment of serine to tRNA(Ser). Is also able to aminoacylate tRNA(Sec) with serine, to form the misacylated tRNA L-seryl-tRNA(Sec), which will be further converted into selenocysteinyl-tRNA(Sec). The protein is Serine--tRNA ligase of Pseudomonas syringae pv. tomato (strain ATCC BAA-871 / DC3000).